The following is a 207-amino-acid chain: Large ribosomal subunit protein uL4 (207 aa).

The protein belongs to the universal ribosomal protein uL4 family. As to quaternary structure, part of the 50S ribosomal subunit.

Its function is as follows. One of the primary rRNA binding proteins, this protein initially binds near the 5'-end of the 23S rRNA. It is important during the early stages of 50S assembly. It makes multiple contacts with different domains of the 23S rRNA in the assembled 50S subunit and ribosome. In terms of biological role, forms part of the polypeptide exit tunnel. In Rickettsia africae (strain ESF-5), this protein is Large ribosomal subunit protein uL4.